The sequence spans 867 residues: Prominin-1 (867 aa).

The signal sequence occupies residues 1–19 (MALVFSALLLLGLCGKISS). At 20–107 (EGQPAFHNTP…VLALKIALYE (88 aa)) the chain is on the extracellular side. Residues 108–128 (IGVLICAILGLLFIILMPLVG) traverse the membrane as a helical segment. Residues 129–158 (CFFCMCRCCNKCGGEMHQRQKQNAPCRRKC) lie on the Cytoplasmic side of the membrane. Residues 159–179 (LGLSLLVICLLMSLGIIYGFV) form a helical membrane-spanning segment. Topologically, residues 180-434 (ANQQTRTRIK…LPKLEEYDSY (255 aa)) are extracellular. N6-acetyllysine occurs at positions 226, 258, and 265. Asn273, Asn291, Asn332, Asn374, and Asn415 each carry an N-linked (GlcNAc...) asparagine glycan. A helical transmembrane segment spans residues 435 to 455 (WWLGGLIVCFLLTLIVTFFFL). Residues 456–487 (GLLCGVFGYDKHATPTRRGCVSNTGGIFLMAG) lie on the Cytoplasmic side of the membrane. A helical membrane pass occupies residues 488–508 (VGFGFLFCWILMILVVLTFVV). Residues 509 to 794 (GANVEKLLCE…LCGYVADPLN (286 aa)) are Extracellular-facing. Asn554, Asn581, and Asn732 each carry an N-linked (GlcNAc...) asparagine glycan. The chain crosses the membrane as a helical span at residues 795 to 815 (LFWFGIGKATVLLLPAVIIAI). At 816–867 (KLAKYYRRMDSEDVYDDVETVPMKNLEIGSNGYHKDHLYGVHNPVMTSPSRY) the chain is on the cytoplasmic side. Ser865 carries the phosphoserine modification.

It belongs to the prominin family. As to quaternary structure, interacts with CDHR1 and with actin filaments. Interacts with NAT8 and NAT8B. Post-translationally, acetylation at Lys-226, Lys-258 and Lys-265 by NAT8 and NAT8B may control PROM1 protein expression and its function in cell apoptosis. As to expression, in the submandibular gland, expressed on the apical side of epithelial cells. In the parotid gland, expressed in the intercalated ducts. In the sublingual gland, expressed in intercalated ducts. In the extraorbital lacrimal gland, expressed in the intercalated tubules and larger intralobular ducts. Expressed in the retina. Present in urine within small membrane particles (at protein level). In the embryo, expressed on the apical side of neuroepithelial cells and of other epithelia such as lung buds, gut and ureter buds. In the adult, expressed at the apical side of the kidney tubules and of the ependymal layer of the brain. Not expressed in gut, liver, lung, pituitary, adrenal, heart or spleen. Localized to the nascent disk membranes at the base of the rod outer segment in the retina (at protein level).

It localises to the apical cell membrane. The protein localises to the cell projection. It is found in the microvillus membrane. The protein resides in the cilium. Its subcellular location is the photoreceptor outer segment. It localises to the endoplasmic reticulum. The protein localises to the endoplasmic reticulum-Golgi intermediate compartment. Its function is as follows. May play a role in cell differentiation, proliferation and apoptosis. Binds cholesterol in cholesterol-containing plasma membrane microdomains and may play a role in the organization of the apical plasma membrane in epithelial cells. During early retinal development acts as a key regulator of disk morphogenesis. Involved in regulation of MAPK and Akt signaling pathways. In neuroblastoma cells suppresses cell differentiation such as neurite outgrowth in a RET-dependent manner. This is Prominin-1 (Prom1) from Mus musculus (Mouse).